The chain runs to 231 residues: Large ribosomal subunit protein uL1 (231 aa).

It belongs to the universal ribosomal protein uL1 family. As to quaternary structure, part of the 50S ribosomal subunit.

Functionally, binds directly to 23S rRNA. The L1 stalk is quite mobile in the ribosome, and is involved in E site tRNA release. In terms of biological role, protein L1 is also a translational repressor protein, it controls the translation of the L11 operon by binding to its mRNA. In Ralstonia nicotianae (strain ATCC BAA-1114 / GMI1000) (Ralstonia solanacearum), this protein is Large ribosomal subunit protein uL1.